The sequence spans 480 residues: Glutamyl-tRNA(Gln) amidotransferase subunit A (480 aa).

Residues K70 and S145 each act as charge relay system in the active site. S169 (acyl-ester intermediate) is an active-site residue.

Belongs to the amidase family. GatA subfamily. As to quaternary structure, heterotrimer of A, B and C subunits.

It catalyses the reaction L-glutamyl-tRNA(Gln) + L-glutamine + ATP + H2O = L-glutaminyl-tRNA(Gln) + L-glutamate + ADP + phosphate + H(+). Functionally, allows the formation of correctly charged Gln-tRNA(Gln) through the transamidation of misacylated Glu-tRNA(Gln) in organisms which lack glutaminyl-tRNA synthetase. The reaction takes place in the presence of glutamine and ATP through an activated gamma-phospho-Glu-tRNA(Gln). This Lactobacillus delbrueckii subsp. bulgaricus (strain ATCC BAA-365 / Lb-18) protein is Glutamyl-tRNA(Gln) amidotransferase subunit A.